We begin with the raw amino-acid sequence, 256 residues long: Protein crossbronx-like (256 aa).

Residues 17–179 form the UBC core domain; it reads NQGYQVLAEY…AKASIVWSWK (163 aa).

This sequence belongs to the ubiquitin-conjugating enzyme family. FTS subfamily.

The protein is Protein crossbronx-like of Drosophila mojavensis (Fruit fly).